A 212-amino-acid chain; its full sequence is Thymidylate kinase (212 aa).

11-18 is a binding site for ATP; it reads GPEGAGKT.

It belongs to the thymidylate kinase family.

The enzyme catalyses dTMP + ATP = dTDP + ADP. Its function is as follows. Phosphorylation of dTMP to form dTDP in both de novo and salvage pathways of dTTP synthesis. The chain is Thymidylate kinase from Streptococcus pneumoniae (strain ATCC 700669 / Spain 23F-1).